The sequence spans 345 residues: Ferrochelatase (345 aa).

Fe cation contacts are provided by histidine 215 and glutamate 296.

The protein belongs to the ferrochelatase family.

It is found in the cytoplasm. It carries out the reaction heme b + 2 H(+) = protoporphyrin IX + Fe(2+). It functions in the pathway porphyrin-containing compound metabolism; protoheme biosynthesis; protoheme from protoporphyrin-IX: step 1/1. Its function is as follows. Catalyzes the ferrous insertion into protoporphyrin IX. The chain is Ferrochelatase from Rhodopseudomonas palustris (strain HaA2).